Consider the following 408-residue polypeptide: Argininosuccinate synthase (408 aa).

ATP contacts are provided by residues 10–18 and alanine 37; that span reads AYSGGLDTS. 2 residues coordinate L-citrulline: tyrosine 90 and serine 95. Residue glycine 120 coordinates ATP. 3 residues coordinate L-aspartate: threonine 122, asparagine 126, and aspartate 127. Residue asparagine 126 participates in L-citrulline binding. L-citrulline contacts are provided by arginine 130, serine 181, serine 190, glutamate 266, and tyrosine 278.

The protein belongs to the argininosuccinate synthase family. Type 1 subfamily. As to quaternary structure, homotetramer.

It localises to the cytoplasm. It catalyses the reaction L-citrulline + L-aspartate + ATP = 2-(N(omega)-L-arginino)succinate + AMP + diphosphate + H(+). It participates in amino-acid biosynthesis; L-arginine biosynthesis; L-arginine from L-ornithine and carbamoyl phosphate: step 2/3. In Chromobacterium violaceum (strain ATCC 12472 / DSM 30191 / JCM 1249 / CCUG 213 / NBRC 12614 / NCIMB 9131 / NCTC 9757 / MK), this protein is Argininosuccinate synthase.